Consider the following 367-residue polypeptide: Phosphoribosylaminoimidazole-succinocarboxamide synthase (367 aa).

It belongs to the SAICAR synthetase family.

The catalysed reaction is 5-amino-1-(5-phospho-D-ribosyl)imidazole-4-carboxylate + L-aspartate + ATP = (2S)-2-[5-amino-1-(5-phospho-beta-D-ribosyl)imidazole-4-carboxamido]succinate + ADP + phosphate + 2 H(+). The protein operates within purine metabolism; IMP biosynthesis via de novo pathway; 5-amino-1-(5-phospho-D-ribosyl)imidazole-4-carboxamide from 5-amino-1-(5-phospho-D-ribosyl)imidazole-4-carboxylate: step 1/2. This is Phosphoribosylaminoimidazole-succinocarboxamide synthase from Vibrio atlanticus (strain LGP32) (Vibrio splendidus (strain Mel32)).